An 878-amino-acid chain; its full sequence is DNA gyrase subunit A (878 aa).

One can recognise a Topo IIA-type catalytic domain in the interval 34–533 (LPDVRDGLKP…NSADINIEDL (500 aa)). Catalysis depends on Y122, which acts as the O-(5'-phospho-DNA)-tyrosine intermediate. Positions 560 to 566 (QRRGGKG) match the GyrA-box motif. Residues 844-878 (DDEELDAIDGSVAEGDEDIAPEAESDDDVADDADE) form a disordered region. The segment covering 857–878 (EGDEDIAPEAESDDDVADDADE) has biased composition (acidic residues).

This sequence belongs to the type II topoisomerase GyrA/ParC subunit family. As to quaternary structure, heterotetramer, composed of two GyrA and two GyrB chains. In the heterotetramer, GyrA contains the active site tyrosine that forms a transient covalent intermediate with DNA, while GyrB binds cofactors and catalyzes ATP hydrolysis.

It localises to the cytoplasm. The catalysed reaction is ATP-dependent breakage, passage and rejoining of double-stranded DNA.. Its function is as follows. A type II topoisomerase that negatively supercoils closed circular double-stranded (ds) DNA in an ATP-dependent manner to modulate DNA topology and maintain chromosomes in an underwound state, and also catalyzes the interconversion of other topological isomers of double-stranded DNA rings, including catenanes and knotted rings. Replenishes negative supercoiling downstream of highly transcribed genes to help control overall chromosomal supercoiling density. E.coli makes 15% more negative supercoils in pBR322 plasmid DNA than S.typhimurium; the S.typhimurium GyrB subunit is toxic in E.coli, while the E.coli copy can be expressed in S.typhimurium even though the 2 subunits have 777/804 residues identical. Negative supercoiling favors strand separation, and DNA replication, transcription, recombination and repair, all of which involve strand separation. Type II topoisomerases break and join 2 DNA strands simultaneously in an ATP-dependent manner. The sequence is that of DNA gyrase subunit A from Salmonella typhimurium (strain LT2 / SGSC1412 / ATCC 700720).